A 137-amino-acid polypeptide reads, in one-letter code: Gonadotropin subunit beta-2 (137 aa).

Positions 1–24 (MLPFMLSSFLGASPSIWPLAPAEA) are cleaved as a signal peptide. Cystine bridges form between Cys-30–Cys-76, Cys-44–Cys-91, Cys-47–Cys-129, Cys-55–Cys-107, Cys-59–Cys-109, and Cys-112–Cys-119. An N-linked (GlcNAc...) asparagine glycan is attached at Asn-34.

This sequence belongs to the glycoprotein hormones subunit beta family. In terms of assembly, heterodimer of an alpha and a beta chain.

It localises to the secreted. Its function is as follows. Involved in gametogenesis and steroidogenesis. The protein is Gonadotropin subunit beta-2 (cgbb) of Acanthopagrus latus (Yellowfin seabream).